The chain runs to 534 residues: (R)-citramalate synthase (534 aa).

The 264-residue stretch at 11 to 274 folds into the Pyruvate carboxyltransferase domain; it reads FHVFDTTLRD…KQVLPEGRLR (264 aa).

Belongs to the alpha-IPM synthase/homocitrate synthase family.

It catalyses the reaction pyruvate + acetyl-CoA + H2O = (3R)-citramalate + CoA + H(+). It participates in amino-acid biosynthesis; L-isoleucine biosynthesis; 2-oxobutanoate from pyruvate: step 1/3. Catalyzes the condensation of pyruvate and acetyl-coenzyme A to form (R)-citramalate. The polypeptide is (R)-citramalate synthase (Streptomyces coelicolor (strain ATCC BAA-471 / A3(2) / M145)).